Consider the following 155-residue polypeptide: Lipoprotein signal peptidase (155 aa).

4 helical membrane-spanning segments follow: residues 7–27 (WFWI…YITV), 39–59 (IIPG…FSAF), 63–83 (VGWL…FAYF), and 96–116 (GFIL…GYVV). Residues Asp117 and Asp133 contribute to the active site. Residues 126–146 (FPVFNLADVFINIGIICLLIS) form a helical membrane-spanning segment.

Belongs to the peptidase A8 family.

The protein resides in the cell inner membrane. The catalysed reaction is Release of signal peptides from bacterial membrane prolipoproteins. Hydrolyzes -Xaa-Yaa-Zaa-|-(S,diacylglyceryl)Cys-, in which Xaa is hydrophobic (preferably Leu), and Yaa (Ala or Ser) and Zaa (Gly or Ala) have small, neutral side chains.. It functions in the pathway protein modification; lipoprotein biosynthesis (signal peptide cleavage). In terms of biological role, this protein specifically catalyzes the removal of signal peptides from prolipoproteins. The polypeptide is Lipoprotein signal peptidase (Microcystis aeruginosa (strain NIES-843 / IAM M-2473)).